The following is a 642-amino-acid chain: MFIFPKDENRRETLTTKLRFSADHLTFTTVTEKLRATAWRFAFSSRAKSVVAMAANEEFTGNLKRQLAKLFDVSLKLTVPDEPSVEPLVAASALGKFGDYQCNNAMGLWSIIKGKGTQFKGPPAVGQALVKSLPTSEMVESCSVAGPGFINVVLSAKWMAKSIENMLIDGVDTWAPTLSVKRAVVDFSSPNIAKEMHVGHLRSTIIGDTLARMLEYSHVEVLRRNHVGDWGTQFGMLIEYLFEKFPDTDSVTETAIGDLQVFYKASKHKFDLDEAFKEKAQQAVVRLQGGDPVYRKAWAKICDISRTEFAKVYQRLRVELEEKGESFYNPHIAKVIEELNSKGLVEESEGARVIFLEGFDIPLMVVKSDGGFNYASTDLTALWYRLNEEKAEWIIYVTDVGQQQHFNMFFKAARKAGWLPDNDKTYPRVNHVGFGLVLGEDGKRFRTRATDVVRLVDLLDEAKTRSKLALIERGKDKEWTPEELDQTAEAVGYGAVKYADLKNNRLTNYTFSFDQMLNDKGNTAVYLLYAHARICSIIRKSGKDIDELKKTGKLALDHADERALGLHLLRFAETVEEACTNLLPSVLCEYLYNLSEHFTRFYSNCQVNGSPEETSRLLLCEATAIVMRKCFHLLGITPVYKI.

A chloroplast and mitochondrion-targeting transit peptide spans 1–53 (MFIFPKDENRRETLTTKLRFSADHLTFTTVTEKLRATAWRFAFSSRAKSVVAM). Alanine 54 is subject to N-acetylalanine. The 'HIGH' region motif lies at 190–201 (PNIAKEMHVGHL).

This sequence belongs to the class-I aminoacyl-tRNA synthetase family.

The protein resides in the plastid. Its subcellular location is the chloroplast. The protein localises to the mitochondrion. It carries out the reaction tRNA(Arg) + L-arginine + ATP = L-arginyl-tRNA(Arg) + AMP + diphosphate. Its function is as follows. Forms part of a macromolecular complex that catalyzes the attachment of specific amino acids to cognate tRNAs during protein synthesis. This is Arginine--tRNA ligase, chloroplastic/mitochondrial from Arabidopsis thaliana (Mouse-ear cress).